The chain runs to 254 residues: Triosephosphate isomerase (254 aa).

Substrate is bound at residue 9–11 (NWK). His-96 serves as the catalytic Electrophile. Glu-169 functions as the Proton acceptor in the catalytic mechanism. Residues Gly-175, Ser-215, and 236–237 (GG) contribute to the substrate site.

The protein belongs to the triosephosphate isomerase family. As to quaternary structure, homodimer.

It localises to the cytoplasm. It carries out the reaction D-glyceraldehyde 3-phosphate = dihydroxyacetone phosphate. It functions in the pathway carbohydrate biosynthesis; gluconeogenesis. It participates in carbohydrate degradation; glycolysis; D-glyceraldehyde 3-phosphate from glycerone phosphate: step 1/1. Functionally, involved in the gluconeogenesis. Catalyzes stereospecifically the conversion of dihydroxyacetone phosphate (DHAP) to D-glyceraldehyde-3-phosphate (G3P). The sequence is that of Triosephosphate isomerase from Borrelia recurrentis (strain A1).